Here is a 297-residue protein sequence, read N- to C-terminus: 1D-myo-inositol 2-acetamido-2-deoxy-alpha-D-glucopyranoside deacetylase (297 aa).

Zn(2+) contacts are provided by histidine 14, aspartate 17, and histidine 149.

The protein belongs to the MshB deacetylase family. It depends on Zn(2+) as a cofactor.

It catalyses the reaction 1D-myo-inositol 2-acetamido-2-deoxy-alpha-D-glucopyranoside + H2O = 1D-myo-inositol 2-amino-2-deoxy-alpha-D-glucopyranoside + acetate. Catalyzes the deacetylation of 1D-myo-inositol 2-acetamido-2-deoxy-alpha-D-glucopyranoside (GlcNAc-Ins) in the mycothiol biosynthesis pathway. The chain is 1D-myo-inositol 2-acetamido-2-deoxy-alpha-D-glucopyranoside deacetylase from Thermomonospora curvata (strain ATCC 19995 / DSM 43183 / JCM 3096 / KCTC 9072 / NBRC 15933 / NCIMB 10081 / Henssen B9).